We begin with the raw amino-acid sequence, 295 residues long: Tissue factor (295 aa).

Positions 1–28 (MAIPMRPRLLAALAPTFLGFLLLQVAVG) are cleaved as a signal peptide. The Extracellular portion of the chain corresponds to 29–252 (AGTPPGKAFN…TEQWKSVLGE (224 aa)). 2 N-linked (GlcNAc...) asparagine glycosylation sites follow: Asn38 and Asn58. A disulfide bridge connects residues Cys76 and Cys84. 4 N-linked (GlcNAc...) asparagine glycosylation sites follow: Asn95, Asn109, Asn170, and Asn201. Cys219 and Cys242 form a disulfide bridge. The short motif at 246 to 248 (WKS) is the WKS motif element. A helical membrane pass occupies residues 253–275 (TLIIVGAVVFLVTVFIILLTISL). Cys276 carries the S-palmitoyl cysteine lipid modification. Over 276–295 (CKRRKNRAGQKRKNTPSRLA) the chain is Cytoplasmic.

The protein belongs to the tissue factor family. In terms of assembly, interacts with HSPE; the interaction, inhibited by heparin, promotes the generation of activated factor X and activates coagulation in the presence of activated factor VII.

It is found in the membrane. In terms of biological role, initiates blood coagulation by forming a complex with circulating factor VII or VIIa. The [TF:VIIa] complex activates factors IX or X by specific limited proteolysis. TF plays a role in normal hemostasis by initiating the cell-surface assembly and propagation of the coagulation protease cascade. The sequence is that of Tissue factor (F3) from Rattus norvegicus (Rat).